A 208-amino-acid chain; its full sequence is MPDTRLRGLYLITPDSPDTTTLVAQVERALRGQPALLQYRSKQRDAALRLGQARQIAALCREAGVPFIVNDSLELALATDADGVHLGREDGDLDAARRALGPGRILGVTCYNEWPRAVAGCAAGADYVAFGAVFPSATKPAAVRAPLELFVRGRRELDVPLAAIGGITLDNAAQVIAAGASLLAVVSDVFDAPDPGARAAAYRTLFDA.

Residues 38–42 (QYRSK) and Asn70 contribute to the 4-amino-2-methyl-5-(diphosphooxymethyl)pyrimidine site. 2 residues coordinate Mg(2+): Asp71 and Asp90. Thr109 provides a ligand contact to 4-amino-2-methyl-5-(diphosphooxymethyl)pyrimidine. 136-138 (SAT) lines the 2-[(2R,5Z)-2-carboxy-4-methylthiazol-5(2H)-ylidene]ethyl phosphate pocket. Lys139 contributes to the 4-amino-2-methyl-5-(diphosphooxymethyl)pyrimidine binding site. 2-[(2R,5Z)-2-carboxy-4-methylthiazol-5(2H)-ylidene]ethyl phosphate is bound by residues Gly166 and 186–187 (VS).

The protein belongs to the thiamine-phosphate synthase family. Mg(2+) is required as a cofactor.

It catalyses the reaction 2-[(2R,5Z)-2-carboxy-4-methylthiazol-5(2H)-ylidene]ethyl phosphate + 4-amino-2-methyl-5-(diphosphooxymethyl)pyrimidine + 2 H(+) = thiamine phosphate + CO2 + diphosphate. It carries out the reaction 2-(2-carboxy-4-methylthiazol-5-yl)ethyl phosphate + 4-amino-2-methyl-5-(diphosphooxymethyl)pyrimidine + 2 H(+) = thiamine phosphate + CO2 + diphosphate. The catalysed reaction is 4-methyl-5-(2-phosphooxyethyl)-thiazole + 4-amino-2-methyl-5-(diphosphooxymethyl)pyrimidine + H(+) = thiamine phosphate + diphosphate. It participates in cofactor biosynthesis; thiamine diphosphate biosynthesis; thiamine phosphate from 4-amino-2-methyl-5-diphosphomethylpyrimidine and 4-methyl-5-(2-phosphoethyl)-thiazole: step 1/1. Functionally, condenses 4-methyl-5-(beta-hydroxyethyl)thiazole monophosphate (THZ-P) and 2-methyl-4-amino-5-hydroxymethyl pyrimidine pyrophosphate (HMP-PP) to form thiamine monophosphate (TMP). This chain is Thiamine-phosphate synthase, found in Aromatoleum aromaticum (strain DSM 19018 / LMG 30748 / EbN1) (Azoarcus sp. (strain EbN1)).